Here is a 259-residue protein sequence, read N- to C-terminus: 12alpha-hydroxysteroid dehydrogenase (259 aa).

Y162 serves as the catalytic Proton acceptor.

It belongs to the short-chain dehydrogenases/reductases (SDR) family. As to quaternary structure, homotetramer.

It carries out the reaction cholate + NADP(+) = 3alpha,7alpha-dihydroxy-12-oxo-5beta-cholanate + NADPH + H(+). The catalysed reaction is deoxycholate + NADP(+) = 12-dehydrodeoxycholate + NADPH + H(+). Functionally, catalyzes the oxidation of the 12alpha-hydroxy group of bile acids, like cholate and deoxycholate. Is also able to catalyze the reverse reaction in vitro. Is likely involved in an epimerization pathway of bile acids that converts hydroxy groups from alpha to beta positions via stable oxo-intermediates, which occurs in the human gut. The polypeptide is 12alpha-hydroxysteroid dehydrogenase (Clostridium sp. (strain ATCC 29733 / VPI C48-50)).